Reading from the N-terminus, the 469-residue chain is tRNA (cytosine(72)-C(5))-methyltransferase NSUN6 (469 aa).

The PUA domain maps to 111 to 203 (QCEAIVGAQC…MGIRMTEPVY (93 aa)). Residues 242 to 248 (CAAPGGK), aspartate 266, aspartate 293, and aspartate 323 contribute to the S-adenosyl-L-methionine site. Catalysis depends on cysteine 373, which acts as the Nucleophile. N6-acetyllysine is present on lysine 419.

Belongs to the class I-like SAM-binding methyltransferase superfamily. RsmB/NOP family.

It localises to the cytoplasm. It catalyses the reaction cytidine(72) in tRNA(Thr) + S-adenosyl-L-methionine = 5-methylcytidine(72) in tRNA(Thr) + S-adenosyl-L-homocysteine + H(+). It carries out the reaction cytidine(72) in tRNA(Cys) + S-adenosyl-L-methionine = 5-methylcytidine(72) in tRNA(Cys) + S-adenosyl-L-homocysteine + H(+). Functionally, S-adenosyl-L-methionine-dependent methyltransferase that specifically methylates the C5 position of cytosine 72 in tRNA(Thr)(TGT) and tRNA(Cys)(GCA). In vitro also methylates tRNA(Thr)(AGT). Methylation requires, in the acceptor stem region, the presence of the 3'-CCA terminus, the target site C72, the discriminator base U73, and the second and third base pairs (2:71 and 3:70) in the tRNA substrates. This Homo sapiens (Human) protein is tRNA (cytosine(72)-C(5))-methyltransferase NSUN6.